A 102-amino-acid polypeptide reads, in one-letter code: MDIKQTAVAGSLESSDLMITVSPNDEQTITITLDSSVEKQFGNHIRQLIHQTLVNLKVTAAKVEAVDKGALDCTIQARTIAAVHRAAGVDQYDWKEIDSWNV.

Ser-14 carries the post-translational modification O-(phosphoribosyl dephospho-coenzyme A)serine.

This sequence belongs to the CitD family. Oligomer with a subunit composition of (alpha,beta,gamma)6.

The protein localises to the cytoplasm. Covalent carrier of the coenzyme of citrate lyase. The protein is Citrate lyase acyl carrier protein of Streptococcus pyogenes serotype M18 (strain MGAS8232).